A 270-amino-acid polypeptide reads, in one-letter code: Phosphate import ATP-binding protein PstB 1 (270 aa).

An ABC transporter domain is found at 24–265 (LAVERLNLFY…PYQRQTEDYI (242 aa)). An ATP-binding site is contributed by 56 to 63 (GPSGCGKS).

It belongs to the ABC transporter superfamily. Phosphate importer (TC 3.A.1.7) family. The complex is composed of two ATP-binding proteins (PstB), two transmembrane proteins (PstC and PstA) and a solute-binding protein (PstS).

The protein resides in the cell inner membrane. The catalysed reaction is phosphate(out) + ATP + H2O = ADP + 2 phosphate(in) + H(+). Functionally, part of the ABC transporter complex PstSACB involved in phosphate import. Responsible for energy coupling to the transport system. The chain is Phosphate import ATP-binding protein PstB 1 from Yersinia pestis bv. Antiqua (strain Antiqua).